We begin with the raw amino-acid sequence, 580 residues long: Glutamyl-tRNA(Gln) amidotransferase subunit B-2, chloroplastic/mitochondrial (580 aa).

Composition is skewed to low complexity over residues 20 to 35 and 42 to 59; these read RRDA…ATVS and AVST…SAAV. The segment at 20–64 is disordered; sequence RRDATAAASTSAATVSRGRRARAVSTTTTTSSSSSSSAAVDARDA.

It belongs to the GatB/GatE family. GatB subfamily. In terms of assembly, subunit of the heterotrimeric GatCAB amidotransferase (AdT) complex, composed of A, B and C subunits.

It is found in the mitochondrion. The protein resides in the plastid. Its subcellular location is the chloroplast. The catalysed reaction is L-glutamyl-tRNA(Gln) + L-glutamine + ATP + H2O = L-glutaminyl-tRNA(Gln) + L-glutamate + ADP + phosphate + H(+). Functionally, allows the formation of correctly charged Gln-tRNA(Gln) through the transamidation of misacylated Glu-tRNA(Gln) in chloroplasts and mitochondria. The reaction takes place in the presence of glutamine and ATP through an activated gamma-phospho-Glu-tRNA(Gln). This is Glutamyl-tRNA(Gln) amidotransferase subunit B-2, chloroplastic/mitochondrial from Micromonas pusilla (strain CCMP1545) (Picoplanktonic green alga).